Consider the following 338-residue polypeptide: Decarboxylase macB (338 aa).

4 residues coordinate Zn(2+): His-7, His-9, His-159, and Asp-283.

Belongs to the metallo-dependent hydrolases superfamily. ACMSD family.

It carries out the reaction 6-methylsalicylate + H(+) = 3-methylphenol + CO2. It participates in secondary metabolite biosynthesis; terpenoid biosynthesis. In terms of biological role, decarboxylase; part of the gene cluster that mediates the biosynthesis of macrophorins, isoprenoid epoxycyclohexenones containing cyclized drimane moieties. The first step of the pathway is the synthesis of 6-methylsalicylic acid (6-MSA) by the polyketide synthase macA. 6-MSA is then converted to m-cresol by the decarboxylase macB. The cytochrome P450 monooxygenase macC then catalyzes the oxidation of m-cresol to toluquinol. Epoxidation of toluquinol is then performed by the short chain dehydrogenase macD, with the help of macE, and a further prenylation by macG leads to 7-deacetoxyyanuthone A. The next step is the hydroxylation of C-22 of 7-deacetoxyyanuthone A by the cytochrome P450 monooxygenase macH to yield 22-deacetylyanuthone A. O-Mevalon transferase macI then attaches mevalon to the hydroxyl group of 22-deacetylyanuthone A to produce yanuthone E. The terpene cyclase macJ catalyzes the cyclization of 22-deacetylyanuthone A to macrophorin A. MacJ is also able to catalyze cyclization of yanuthone E and 7-deacetoxyyanuthone A to their corresponding macrophorins. The macJ products can be further modified by macH and macJ, as well as by the FAD-dependent monooxygenase macF, to produce additional macrophorins, including 4'-oxomacrophorin A, 4'-oxomacrophorin D and 4'-oxomacrophorin E. This Penicillium terrestre protein is Decarboxylase macB.